Consider the following 71-residue polypeptide: Movement protein TGBp3 (71 aa).

The Lumenal portion of the chain corresponds to 1–4 (MWSD). The helical transmembrane segment at 5–27 (SLVSRICVPIIVVCTSIALLNVV) threads the bilayer. Residues 28-71 (SFRSECSCVVHISGAAIDIRGCSFTPDFIEYAKTLRVFNHRYQE) lie on the Cytoplasmic side of the membrane.

The protein belongs to the Tymovirales TGBp3 protein family.

The protein localises to the host endoplasmic reticulum membrane. Functionally, plays a role in viral cell-to-cell propagation, by facilitating genome transport to neighboring plant cells through plasmosdesmata. May induce the formation of granular vesicles derived from the Endoplasmic reticulum, which align on actin filaments. The protein is Movement protein TGBp3 of Populus balsamifera (Balsam poplar).